The sequence spans 301 residues: Probable aspartoacylase (301 aa).

Zn(2+) is bound by residues H13 and E16. Residues R54 and 61-62 (NR) each bind substrate. Residue H105 participates in Zn(2+) binding. Substrate is bound by residues E163 and Y273.

The protein belongs to the AspA/AstE family. Aspartoacylase subfamily. Requires Zn(2+) as cofactor.

It catalyses the reaction an N-acyl-L-aspartate + H2O = a carboxylate + L-aspartate. The sequence is that of Probable aspartoacylase from Prochlorococcus marinus (strain AS9601).